A 237-amino-acid chain; its full sequence is Uridylate kinase (237 aa).

12 to 15 (KLSG) contributes to the ATP binding site. An involved in allosteric activation by GTP region spans residues 20 to 25 (GENGFG). Gly54 provides a ligand contact to UMP. ATP contacts are provided by Gly55 and Arg59. Residues Asp72 and 133-140 (TGNPYFST) each bind UMP. Residues Tyr166 and Asp169 each coordinate ATP.

The protein belongs to the UMP kinase family. As to quaternary structure, homohexamer.

Its subcellular location is the cytoplasm. The enzyme catalyses UMP + ATP = UDP + ADP. It participates in pyrimidine metabolism; CTP biosynthesis via de novo pathway; UDP from UMP (UMPK route): step 1/1. With respect to regulation, allosterically activated by GTP. Inhibited by UTP. Its function is as follows. Catalyzes the reversible phosphorylation of UMP to UDP. The polypeptide is Uridylate kinase (Clostridium perfringens (strain SM101 / Type A)).